A 207-amino-acid polypeptide reads, in one-letter code: Thiamine-phosphate synthase (207 aa).

4-amino-2-methyl-5-(diphosphooxymethyl)pyrimidine-binding positions include Gln-36–Lys-40 and Asn-68. Residues Asp-69 and Asp-88 each contribute to the Mg(2+) site. Ser-106 contributes to the 4-amino-2-methyl-5-(diphosphooxymethyl)pyrimidine binding site. Thr-132–Thr-134 is a binding site for 2-[(2R,5Z)-2-carboxy-4-methylthiazol-5(2H)-ylidene]ethyl phosphate. Lys-135 provides a ligand contact to 4-amino-2-methyl-5-(diphosphooxymethyl)pyrimidine. 2-[(2R,5Z)-2-carboxy-4-methylthiazol-5(2H)-ylidene]ethyl phosphate-binding positions include Gly-162 and Val-182–Ser-183.

It belongs to the thiamine-phosphate synthase family. The cofactor is Mg(2+).

The catalysed reaction is 2-[(2R,5Z)-2-carboxy-4-methylthiazol-5(2H)-ylidene]ethyl phosphate + 4-amino-2-methyl-5-(diphosphooxymethyl)pyrimidine + 2 H(+) = thiamine phosphate + CO2 + diphosphate. It catalyses the reaction 2-(2-carboxy-4-methylthiazol-5-yl)ethyl phosphate + 4-amino-2-methyl-5-(diphosphooxymethyl)pyrimidine + 2 H(+) = thiamine phosphate + CO2 + diphosphate. It carries out the reaction 4-methyl-5-(2-phosphooxyethyl)-thiazole + 4-amino-2-methyl-5-(diphosphooxymethyl)pyrimidine + H(+) = thiamine phosphate + diphosphate. The protein operates within cofactor biosynthesis; thiamine diphosphate biosynthesis; thiamine phosphate from 4-amino-2-methyl-5-diphosphomethylpyrimidine and 4-methyl-5-(2-phosphoethyl)-thiazole: step 1/1. In terms of biological role, condenses 4-methyl-5-(beta-hydroxyethyl)thiazole monophosphate (THZ-P) and 2-methyl-4-amino-5-hydroxymethyl pyrimidine pyrophosphate (HMP-PP) to form thiamine monophosphate (TMP). This is Thiamine-phosphate synthase from Methanococcus maripaludis (strain C5 / ATCC BAA-1333).